The primary structure comprises 1056 residues: Sucrose-phosphate synthase (1056 aa).

Over residues 112 to 123 the composition is skewed to basic and acidic residues; the sequence is HVERERGRREAT. The tract at residues 112-132 is disordered; it reads HVERERGRREATADMSEDLSE. 2 positions are modified to phosphoserine: Ser158 and Ser424. The segment at 681–700 is disordered; sequence NWQRIDEGSENSDTDSAGDS.

This sequence belongs to the glycosyltransferase 1 family. As to quaternary structure, homodimer or homotetramer. In terms of processing, phosphorylated at Ser-158 and Ser-424.

It catalyses the reaction beta-D-fructose 6-phosphate + UDP-alpha-D-glucose = sucrose 6(F)-phosphate + UDP + H(+). The protein operates within glycan biosynthesis; sucrose biosynthesis; sucrose from D-fructose 6-phosphate and UDP-alpha-D-glucose: step 1/2. Activity is regulated by phosphorylation and moderated by concentration of metabolites and light. Functionally, plays a role in photosynthetic sucrose synthesis by catalyzing the rate-limiting step of sucrose biosynthesis from UDP-glucose and fructose- 6-phosphate. Involved in the regulation of carbon partitioning in the leaves of plants. May regulate the synthesis of sucrose and therefore play a major role as a limiting factor in the export of photoassimilates out of the leaf. Plays a role for sucrose availability that is essential for plant growth and fiber elongation. The protein is Sucrose-phosphate synthase (SPS1) of Spinacia oleracea (Spinach).